The chain runs to 395 residues: MLGRSRLTFVLLAAAVTCAEAQHAPPWTEDCRKSTYPPSGPTYRGPVPWYTINLDLPPYKRWHELMVDKGPMLKIIVNSFKNMVNTFVPSGKVMQMVDQKLPDLLGQFSGPYEEEMKGIADVTEIPLGEIISFNIFYELFTMCTSIITEDKKGHLLHVRNMDFGIFLGWNINNNTWVITEELKPLTVNLDFQRNSKTVFKATSFAGYVGMLTGFKPGQFSLTLNERFSMNGGYLGLLEWILGKKDASWIGFITRSVLENATSYEEAKNILAKTKLLAPAYFILGGNQSGEGCVITRERKDSLDIYELDPKQGRWYVVQTNYDRWKNPLFLDDRRTPAQTCLKRTTQENLSFATLYDILSTKPVLNKLTVFTALMDVTKNHYEAYLRDCPDPCVGW.

The N-terminal stretch at 1 to 21 is a signal peptide; sequence MLGRSRLTFVLLAAAVTCAEA. An intrachain disulfide couples Cys31 to Cys340. Cys143 functions as the Nucleophile in the catalytic mechanism. Asn173, Asn259, Asn286, and Asn348 each carry an N-linked (GlcNAc...) asparagine glycan. Cys388 and Cys392 are joined by a disulfide.

Belongs to the acid ceramidase family. As to quaternary structure, heterodimer; disulfide-linked. The heterodimer is composed of the disulfide-linked alpha and beta chains produced by autocatalytic cleavage of the precursor. Post-translationally, N-glycosylated. In terms of processing, proteolytically cleaved into two chains alpha and beta that remain associated via a disulfide bond. Cleavage gives rise to a conformation change that activates the enzyme. The same catalytic Cys residue mediates the autoproteolytic cleavage and subsequent hydrolysis of lipid substrates. The beta chain may undergo an additional C-terminal processing.

It is found in the lysosome. The protein localises to the secreted. The enzyme catalyses an N-acylsphing-4-enine + H2O = sphing-4-enine + a fatty acid. The catalysed reaction is N-dodecanoylsphing-4-enine + H2O = dodecanoate + sphing-4-enine. It catalyses the reaction N-tetradecanoylsphing-4-enine + H2O = tetradecanoate + sphing-4-enine. It carries out the reaction N-hexadecanoylsphing-4-enine + H2O = sphing-4-enine + hexadecanoate. The enzyme catalyses N-octadecanoylsphing-4-enine + H2O = sphing-4-enine + octadecanoate. The catalysed reaction is N-dodecanoyl-(4R)-hydroxysphinganine + H2O = (4R)-hydroxysphinganine + dodecanoate. It catalyses the reaction N-(dodecanoyl)-sphinganine + H2O = dodecanoate + sphinganine. It carries out the reaction N-(acetyl)-sphing-4-enine + H2O = sphing-4-enine + acetate. The enzyme catalyses N-(hexanoyl)sphing-4-enine + H2O = hexanoate + sphing-4-enine. The catalysed reaction is N-octanoylsphing-4-enine + H2O = octanoate + sphing-4-enine. It catalyses the reaction N-(9Z-octadecenoyl)-sphing-4-enine + H2O = sphing-4-enine + (9Z)-octadecenoate. It carries out the reaction N-dodecanoylethanolamine + H2O = dodecanoate + ethanolamine. Its pathway is lipid metabolism; sphingolipid metabolism. Its function is as follows. Lysosomal ceramidase that hydrolyzes sphingolipid ceramides into sphingosine and free fatty acids at acidic pH. Ceramides, sphingosine, and its phosphorylated form sphingosine-1-phosphate are bioactive lipids that mediate cellular signaling pathways regulating several biological processes including cell proliferation, apoptosis and differentiation. Has a higher catalytic efficiency towards C12-ceramides versus other ceramides. Also catalyzes the reverse reaction allowing the synthesis of ceramides from fatty acids and sphingosine. For the reverse synthetic reaction, the natural sphingosine D-erythro isomer is more efficiently utilized as a substrate compared to D-erythro-dihydrosphingosine and D-erythro-phytosphingosine, while the fatty acids with chain lengths of 12 or 14 carbons are the most efficiently used. Also has an N-acylethanolamine hydrolase activity. By regulating the levels of ceramides, sphingosine and sphingosine-1-phosphate in the epidermis, mediates the calcium-induced differentiation of epidermal keratinocytes. Also indirectly regulates tumor necrosis factor/TNF-induced apoptosis. By regulating the intracellular balance between ceramides and sphingosine, in adrenocortical cells, probably also acts as a regulator of steroidogenesis. This is Acid ceramidase from Heterocephalus glaber (Naked mole rat).